We begin with the raw amino-acid sequence, 524 residues long: GMP synthase [glutamine-hydrolyzing] (524 aa).

A Glutamine amidotransferase type-1 domain is found at 9-207 (RILILDFGSQ…VIHICQCIPN (199 aa)). The active-site Nucleophile is Cys86. Active-site residues include His181 and Glu183. The GMPS ATP-PPase domain occupies 208-399 (WTTKHIIEDS…LGLPADLIYR (192 aa)). 235–241 (SGGVDSA) serves as a coordination point for ATP.

In terms of assembly, homodimer.

It catalyses the reaction XMP + L-glutamine + ATP + H2O = GMP + L-glutamate + AMP + diphosphate + 2 H(+). The protein operates within purine metabolism; GMP biosynthesis; GMP from XMP (L-Gln route): step 1/1. Its function is as follows. Catalyzes the synthesis of GMP from XMP. In Coxiella burnetii (strain RSA 331 / Henzerling II), this protein is GMP synthase [glutamine-hydrolyzing].